A 444-amino-acid polypeptide reads, in one-letter code: Chitinase-like protein Idgf5 (444 aa).

Positions 1–26 (MMWIQKNPFLGLLLCSFLAFFQSTYA) are cleaved as a signal peptide. Residues 29 to 444 (GKLVCFYDAQ…PILRSIKFKL (416 aa)) form the GH18 domain. Cysteines 33 and 60 form a disulfide. Residues asparagine 289 and asparagine 311 are each glycosylated (N-linked (GlcNAc...) asparagine). A disulfide bridge links cysteine 349 with cysteine 429.

Belongs to the glycosyl hydrolase 18 family. IDGF subfamily. In terms of processing, glycosylated.

Its subcellular location is the secreted. Probably required to stimulate the proliferation, polarization and motility of imaginal disk cells. May act by stabilizing the binding of insulin-like peptides to its receptor through a simultaneous interaction with both molecules to form a multiprotein signaling complex. The chain is Chitinase-like protein Idgf5 (Idgf5) from Drosophila melanogaster (Fruit fly).